The sequence spans 232 residues: 7-cyano-7-deazaguanine synthase (232 aa).

8–18 (FSGGQDSTTCL) is a binding site for ATP. Residues Cys187, Cys196, Cys199, and Cys202 each contribute to the Zn(2+) site.

The protein belongs to the QueC family. The cofactor is Zn(2+).

It catalyses the reaction 7-carboxy-7-deazaguanine + NH4(+) + ATP = 7-cyano-7-deazaguanine + ADP + phosphate + H2O + H(+). The protein operates within purine metabolism; 7-cyano-7-deazaguanine biosynthesis. In terms of biological role, catalyzes the ATP-dependent conversion of 7-carboxy-7-deazaguanine (CDG) to 7-cyano-7-deazaguanine (preQ(0)). This is 7-cyano-7-deazaguanine synthase from Vibrio parahaemolyticus serotype O3:K6 (strain RIMD 2210633).